We begin with the raw amino-acid sequence, 207 residues long: Small ribosomal subunit protein uS2 (207 aa).

Belongs to the universal ribosomal protein uS2 family.

This chain is Small ribosomal subunit protein uS2, found in Nitrosopumilus maritimus (strain SCM1).